The following is a 128-amino-acid chain: MQALLFISCGAILGASLRWAIGLLFNPLFSSFAFGTLIANLFGCLIIGVLLGLFWQFPQISSEWRLFLITGFLGSLTTFSSFSSEVVELFFNDKWLNGFCVLMMHLFGCLAMTVLGIWIYKICSQLLS.

Transmembrane regions (helical) follow at residues 5–25, 34–54, 67–87, and 99–119; these read LFIS…GLLF, FGTL…LGLF, FLIT…SEVV, and FCVL…GIWI. Residues Gly-74 and Thr-77 each contribute to the Na(+) site.

This sequence belongs to the fluoride channel Fluc/FEX (TC 1.A.43) family.

It localises to the cell inner membrane. It carries out the reaction fluoride(in) = fluoride(out). Its activity is regulated as follows. Na(+) is not transported, but it plays an essential structural role and its presence is essential for fluoride channel function. Functionally, fluoride-specific ion channel. Important for reducing fluoride concentration in the cell, thus reducing its toxicity. The chain is Fluoride-specific ion channel FluC from Haemophilus influenzae (strain PittGG).